Here is a 103-residue protein sequence, read N- to C-terminus: Stefin-2 (103 aa).

The short motif at 52–56 (QVVQG) is the Secondary area of contact element.

Belongs to the cystatin family.

The protein resides in the cytoplasm. This is an intracellular thiol proteinase inhibitor. This chain is Stefin-2 (Stfa2), found in Mus musculus (Mouse).